We begin with the raw amino-acid sequence, 508 residues long: MGLPWYRVHTVVLNDPGRLISVHIMHTALVAGWAGSMTLYELAVFDPSDPVLDPMWRQGMFVIPFMTRLGIKDSWSGWNITGETVINPGIWSYEGVAGAHIMFSGLMFLAAIWHWVYWDLEIFYDERTGKLCLDLPKVFGIHLFLSGVACFGFGAFHVTGLYGPGIWVSDPYGLTGKIQPVDPAWGAEGFDPFVPGGIASHHIAAGILGILAGLFHLSVRPPQRLYVGLRMGNIETVLSSSIAAVFFAAFIVAGTMWYGSATTPVELFGPTRYQWDQGYFQQEIDRRVRAGLAENLSLSEAWSKIPEKLAFYDYIGNNPAKGGLFRAGAMDNGDGIAVGWLGHPIFKDKEGNELFVRRMPTFFETFPVVLVDKEGIVKADVPFRRAESKYSVEQVGVTVEFYGGGLDRVSFGDPAIVKKYARRAQLGEIFELDRATLKSDGVFRSSPRGWFTFGHATFALLFFSGHIWHGARTLFRDVFAGIDPDLDSRIEFGAFQKLGDPTTKRQVV.

Helical transmembrane passes span 21 to 36 (SVHI…WAGS), 101 to 115 (IMFS…IWHW), 140 to 156 (GIHL…FGAF), 203 to 218 (IAAG…FHLS), 237 to 252 (VLSS…AFIV), and 457 to 472 (TFAL…HGAR).

It belongs to the PsbB/PsbC family. PsbB subfamily. As to quaternary structure, PSII is composed of 1 copy each of membrane proteins PsbA, PsbB, PsbC, PsbD, PsbE, PsbF, PsbH, PsbI, PsbJ, PsbK, PsbL, PsbM, PsbT, PsbX, PsbY, PsbZ, Psb30/Ycf12, at least 3 peripheral proteins of the oxygen-evolving complex and a large number of cofactors. It forms dimeric complexes. Requires Binds multiple chlorophylls. PSII binds additional chlorophylls, carotenoids and specific lipids. as cofactor.

The protein resides in the plastid. It is found in the chloroplast thylakoid membrane. One of the components of the core complex of photosystem II (PSII). It binds chlorophyll and helps catalyze the primary light-induced photochemical processes of PSII. PSII is a light-driven water:plastoquinone oxidoreductase, using light energy to abstract electrons from H(2)O, generating O(2) and a proton gradient subsequently used for ATP formation. The protein is Photosystem II CP47 reaction center protein of Pinus koraiensis (Korean pine).